The sequence spans 157 residues: 2-C-methyl-D-erythritol 2,4-cyclodiphosphate synthase (157 aa).

Residues D8 and H10 each contribute to the a divalent metal cation site. 4-CDP-2-C-methyl-D-erythritol 2-phosphate-binding positions include 8–10 and 34–35; these read DVH and HS. Residue H42 participates in a divalent metal cation binding. Residues 56–58, 61–65, 100–106, 132–135, F139, and R142 each bind 4-CDP-2-C-methyl-D-erythritol 2-phosphate; these read DIG, FPDTD, AQAPKMA, and TTEE.

Belongs to the IspF family. In terms of assembly, homotrimer. Requires a divalent metal cation as cofactor.

The catalysed reaction is 4-CDP-2-C-methyl-D-erythritol 2-phosphate = 2-C-methyl-D-erythritol 2,4-cyclic diphosphate + CMP. It functions in the pathway isoprenoid biosynthesis; isopentenyl diphosphate biosynthesis via DXP pathway; isopentenyl diphosphate from 1-deoxy-D-xylulose 5-phosphate: step 4/6. Its function is as follows. Involved in the biosynthesis of isopentenyl diphosphate (IPP) and dimethylallyl diphosphate (DMAPP), two major building blocks of isoprenoid compounds. Catalyzes the conversion of 4-diphosphocytidyl-2-C-methyl-D-erythritol 2-phosphate (CDP-ME2P) to 2-C-methyl-D-erythritol 2,4-cyclodiphosphate (ME-CPP) with a corresponding release of cytidine 5-monophosphate (CMP). This chain is 2-C-methyl-D-erythritol 2,4-cyclodiphosphate synthase, found in Pseudomonas entomophila (strain L48).